Here is a 487-residue protein sequence, read N- to C-terminus: Protein nucleotidyltransferase YdiU (487 aa).

Residues Gly90, Gly92, Arg93, Lys113, Asp125, Gly126, Arg176, and Arg183 each contribute to the ATP site. Catalysis depends on Asp252, which acts as the Proton acceptor. Mg(2+)-binding residues include Asn253 and Asp262. An ATP-binding site is contributed by Asp262.

It belongs to the SELO family. Mg(2+) is required as a cofactor. The cofactor is Mn(2+).

The catalysed reaction is L-seryl-[protein] + ATP = 3-O-(5'-adenylyl)-L-seryl-[protein] + diphosphate. It carries out the reaction L-threonyl-[protein] + ATP = 3-O-(5'-adenylyl)-L-threonyl-[protein] + diphosphate. The enzyme catalyses L-tyrosyl-[protein] + ATP = O-(5'-adenylyl)-L-tyrosyl-[protein] + diphosphate. It catalyses the reaction L-histidyl-[protein] + UTP = N(tele)-(5'-uridylyl)-L-histidyl-[protein] + diphosphate. The catalysed reaction is L-seryl-[protein] + UTP = O-(5'-uridylyl)-L-seryl-[protein] + diphosphate. It carries out the reaction L-tyrosyl-[protein] + UTP = O-(5'-uridylyl)-L-tyrosyl-[protein] + diphosphate. Nucleotidyltransferase involved in the post-translational modification of proteins. It can catalyze the addition of adenosine monophosphate (AMP) or uridine monophosphate (UMP) to a protein, resulting in modifications known as AMPylation and UMPylation. This Pseudomonas syringae pv. syringae (strain B728a) protein is Protein nucleotidyltransferase YdiU.